A 309-amino-acid polypeptide reads, in one-letter code: Homoserine O-succinyltransferase (309 aa).

Cys-142 (acyl-thioester intermediate) is an active-site residue. Substrate contacts are provided by Lys-163 and Ser-192. His-235 (proton acceptor) is an active-site residue. The active site involves Glu-237. Arg-249 lines the substrate pocket.

It belongs to the MetA family.

The protein localises to the cytoplasm. The catalysed reaction is L-homoserine + succinyl-CoA = O-succinyl-L-homoserine + CoA. It functions in the pathway amino-acid biosynthesis; L-methionine biosynthesis via de novo pathway; O-succinyl-L-homoserine from L-homoserine: step 1/1. Its function is as follows. Transfers a succinyl group from succinyl-CoA to L-homoserine, forming succinyl-L-homoserine. The sequence is that of Homoserine O-succinyltransferase from Yersinia pseudotuberculosis serotype O:1b (strain IP 31758).